A 238-amino-acid chain; its full sequence is ATP synthase subunit a (238 aa).

Helical transmembrane passes span 18 to 38 (GTTMITTTIAMAIVVIITVIG), 76 to 96 (FIVLAYALLFYVFVANMMGIP), 117 to 137 (VLTLTMAVFIVVLTHIYGIMV), 173 to 193 (LFGNIYAKEILMLLLVSLGTT), and 208 to 230 (WQAFSIFIGSLQAYIFAMLAMVY).

The protein belongs to the ATPase A chain family. As to quaternary structure, F-type ATPases have 2 components, CF(1) - the catalytic core - and CF(0) - the membrane proton channel. CF(1) has five subunits: alpha(3), beta(3), gamma(1), delta(1), epsilon(1). CF(0) has three main subunits: a(1), b(2) and c(9-12). The alpha and beta chains form an alternating ring which encloses part of the gamma chain. CF(1) is attached to CF(0) by a central stalk formed by the gamma and epsilon chains, while a peripheral stalk is formed by the delta and b chains.

The protein localises to the cell membrane. Functionally, key component of the proton channel; it plays a direct role in the translocation of protons across the membrane. The sequence is that of ATP synthase subunit a from Shouchella clausii (strain KSM-K16) (Alkalihalobacillus clausii).